Consider the following 146-residue polypeptide: Leghemoglobin 2 (146 aa).

The 145-residue stretch at 2–146 folds into the Globin domain; that stretch reads GFTAQQDALV…LAAAIKKAMS (145 aa). Nitrated tyrosine is present on Tyr30. Ser45 contacts heme b. Ser45 bears the Phosphoserine mark. Residue His61 participates in O2 binding. 3 residues coordinate heme b: Lys64, His93, and Lys96. Position 134 is a nitrated tyrosine (Tyr134).

It belongs to the plant globin family. Monomer. In terms of processing, nitrated in effective nodules and particularly in hypoxic conditions; this mechanism may play a protective role in the symbiosis by buffering toxic peroxynitrite NO(2)(-). Nitration level decrease during nodule senescence. Phosphorylation at Ser-45 disrupts the molecular environment of its porphyrin ring oxygen binding pocket, thus leading to a reduced oxygen consumption and to the delivery of oxygen O(2) to symbiosomes. As to expression, specifically and strongly expressed in root nodules and at low levels in seedlings.

It localises to the cytoplasm. The protein resides in the cytosol. The protein localises to the nucleus. Its function is as follows. Leghemoglobin that reversibly binds oxygen O(2) through a pentacoordinated heme iron. In root nodules, facilitates the diffusion of oxygen to the bacteroids while preventing the bacterial nitrogenase from being inactivated by buffering dioxygen, nitric oxide and carbon monoxide, and promoting the formation of reactive oxygen species (ROS, e.g. H(2)O(2)). This role is essential for symbiotic nitrogen fixation (SNF). The polypeptide is Leghemoglobin 2 (Lotus japonicus (Lotus corniculatus var. japonicus)).